Here is a 124-residue protein sequence, read N- to C-terminus: UPF0375 protein Y45F10C.4 (124 aa).

Residues 1–23 (MNFLPSTVLLLSFVVAIISGSFS) form the signal peptide. N36 and N62 each carry an N-linked (GlcNAc...) asparagine glycan.

It belongs to the UPF0375 family.

The protein resides in the secreted. This is UPF0375 protein Y45F10C.4 from Caenorhabditis elegans.